A 327-amino-acid chain; its full sequence is Phenylalanine--tRNA ligase alpha subunit (327 aa).

E252 serves as a coordination point for Mg(2+).

It belongs to the class-II aminoacyl-tRNA synthetase family. Phe-tRNA synthetase alpha subunit type 1 subfamily. As to quaternary structure, tetramer of two alpha and two beta subunits. It depends on Mg(2+) as a cofactor.

It localises to the cytoplasm. It catalyses the reaction tRNA(Phe) + L-phenylalanine + ATP = L-phenylalanyl-tRNA(Phe) + AMP + diphosphate + H(+). The chain is Phenylalanine--tRNA ligase alpha subunit from Shewanella oneidensis (strain ATCC 700550 / JCM 31522 / CIP 106686 / LMG 19005 / NCIMB 14063 / MR-1).